Here is a 203-residue protein sequence, read N- to C-terminus: Small ribosomal subunit protein uS4 (203 aa).

The S4 RNA-binding domain occupies 93-153 (QRLDSLVYRL…DKSKNIVPIQ (61 aa)).

It belongs to the universal ribosomal protein uS4 family. In terms of assembly, part of the 30S ribosomal subunit. Contacts protein S5. The interaction surface between S4 and S5 is involved in control of translational fidelity.

Functionally, one of the primary rRNA binding proteins, it binds directly to 16S rRNA where it nucleates assembly of the body of the 30S subunit. Its function is as follows. With S5 and S12 plays an important role in translational accuracy. This is Small ribosomal subunit protein uS4 from Leuconostoc citreum (strain KM20).